A 356-amino-acid polypeptide reads, in one-letter code: Dynein axonemal heavy chain 12 (356 aa).

6 ANK repeats span residues 17-46 (DSSS…DANV), 50-81 (SGHL…AIKR), 82-111 (SGIS…DVNF), 124-153 (HRKS…MPNQ), 154-183 (DPVN…NVNY), and 185-218 (CRVN…DTEL). The SOCS box domain maps to 290 to 345 (WSEIHFILTNPRSLKHLCRLKIRKCMGRLRLRCPVFMSFLPLPSRLKAYVLYKEYD).

Belongs to the dynein heavy chain family. As to quaternary structure, consists of at least two heavy chains and a number of intermediate and light chains.

The protein resides in the cytoplasm. Its subcellular location is the cytoskeleton. It is found in the cilium axoneme. Its pathway is protein modification; protein ubiquitination. Functionally, force generating protein of respiratory cilia. Produces force towards the minus ends of microtubules. Dynein has ATPase activity; the force-producing power stroke is thought to occur on release of ADP. Involved in sperm motility; implicated in sperm flagellar assembly. Its function is as follows. May be a substrate-recognition component of a SCF-like ECS (Elongin-Cullin-SOCS-box protein) E3 ubiquitin-protein ligase complex which mediates the ubiquitination and subsequent proteasomal degradation of target proteins. The sequence is that of Dynein axonemal heavy chain 12 (DNAH12) from Bos taurus (Bovine).